The chain runs to 155 residues: Small ribosomal subunit protein uS7 (155 aa).

The protein belongs to the universal ribosomal protein uS7 family. In terms of assembly, part of the 30S ribosomal subunit. Contacts proteins S9 and S11.

One of the primary rRNA binding proteins, it binds directly to 16S rRNA where it nucleates assembly of the head domain of the 30S subunit. Is located at the subunit interface close to the decoding center, probably blocks exit of the E-site tRNA. This Thioalkalivibrio sulfidiphilus (strain HL-EbGR7) protein is Small ribosomal subunit protein uS7.